We begin with the raw amino-acid sequence, 644 residues long: Core protein VP4 (644 aa).

Belongs to the orbivirus VP4 family.

The protein localises to the virion. Its function is as follows. The VP4 protein is one of the five proteins (with VP1, VP3, VP6 and VP7) which form the inner capsid of the virus. The sequence is that of Core protein VP4 (Segment-4) from Bluetongue virus 2 (isolate USA) (BTV 2).